The sequence spans 524 residues: MSDPLIKRALVSVSDKTGIVDFCRELVSLGVEIFSTGGTLKTLQDAGLKAASISTITGFPEIMDGRVKTLHPKIHGGLLAVRNNPDHSAQAIENGISFIDMVVVNLYPFEATVAKPDVSFEDAIENIDIGGPSMLRSAAKNNESVTVLTDSADYAGVLAEMRAGGGATLRSTRLRLALKVFELTSRYDRAIAGYLSKSAGTEVAAAESMTVQLDKELGMRYGENPHQSAGFYRLTDADGTRSFADYFEKLHGKELSYNNMLDIAAAGGLIEEFRGEDPSVVIIKHTNPCGVAQAPTLLEAWKRAFSTDTQAPFGGIIAFNRPLDMETAKAVNAIFTEILIAPAYEEGVLDMLMKKKDRRLLVQTGALPKGGWEFKSTPFGMLVQERDSRIATRDELKVVTKRQPTEEELGDLMFAWKICKHIKSNTILYVRNRQTYGVGAGQMSRVDSSKIARWKASEVNLDLHGSVVASDAFFPFADGLLAAAEAGVTAVIQPGGSIRDNEVIEAADANNLAMVFTGMRHFKH.

The region spanning Met1 to Thr149 is the MGS-like domain.

It belongs to the PurH family.

It carries out the reaction (6R)-10-formyltetrahydrofolate + 5-amino-1-(5-phospho-beta-D-ribosyl)imidazole-4-carboxamide = 5-formamido-1-(5-phospho-D-ribosyl)imidazole-4-carboxamide + (6S)-5,6,7,8-tetrahydrofolate. It catalyses the reaction IMP + H2O = 5-formamido-1-(5-phospho-D-ribosyl)imidazole-4-carboxamide. It participates in purine metabolism; IMP biosynthesis via de novo pathway; 5-formamido-1-(5-phospho-D-ribosyl)imidazole-4-carboxamide from 5-amino-1-(5-phospho-D-ribosyl)imidazole-4-carboxamide (10-formyl THF route): step 1/1. It functions in the pathway purine metabolism; IMP biosynthesis via de novo pathway; IMP from 5-formamido-1-(5-phospho-D-ribosyl)imidazole-4-carboxamide: step 1/1. The polypeptide is Bifunctional purine biosynthesis protein PurH (Chlorobium phaeovibrioides (strain DSM 265 / 1930) (Prosthecochloris vibrioformis (strain DSM 265))).